Consider the following 555-residue polypeptide: Formate--tetrahydrofolate ligase (555 aa).

Thr-65–Ser-72 contacts ATP.

Belongs to the formate--tetrahydrofolate ligase family.

It carries out the reaction (6S)-5,6,7,8-tetrahydrofolate + formate + ATP = (6R)-10-formyltetrahydrofolate + ADP + phosphate. It participates in one-carbon metabolism; tetrahydrofolate interconversion. The sequence is that of Formate--tetrahydrofolate ligase from Staphylococcus haemolyticus (strain JCSC1435).